We begin with the raw amino-acid sequence, 112 residues long: Small ribosomal subunit protein bS6 (112 aa).

The protein belongs to the bacterial ribosomal protein bS6 family.

Its function is as follows. Binds together with bS18 to 16S ribosomal RNA. The protein is Small ribosomal subunit protein bS6 of Chlamydia felis (strain Fe/C-56) (Chlamydophila felis).